The sequence spans 293 residues: tRNA pseudouridine synthase B (293 aa).

Catalysis depends on aspartate 39, which acts as the Nucleophile.

Belongs to the pseudouridine synthase TruB family. Type 1 subfamily.

It catalyses the reaction uridine(55) in tRNA = pseudouridine(55) in tRNA. Functionally, responsible for synthesis of pseudouridine from uracil-55 in the psi GC loop of transfer RNAs. The sequence is that of tRNA pseudouridine synthase B from Rickettsia bellii (strain OSU 85-389).